A 227-amino-acid polypeptide reads, in one-letter code: Cytidylate kinase (227 aa).

10 to 18 (GPASSGKST) is a binding site for ATP.

The protein belongs to the cytidylate kinase family. Type 1 subfamily.

It is found in the cytoplasm. It catalyses the reaction CMP + ATP = CDP + ADP. The enzyme catalyses dCMP + ATP = dCDP + ADP. This is Cytidylate kinase from Streptococcus mutans serotype c (strain ATCC 700610 / UA159).